The primary structure comprises 100 residues: Aspartyl/glutamyl-tRNA(Asn/Gln) amidotransferase subunit C (100 aa).

This sequence belongs to the GatC family. As to quaternary structure, heterotrimer of A, B and C subunits.

It carries out the reaction L-glutamyl-tRNA(Gln) + L-glutamine + ATP + H2O = L-glutaminyl-tRNA(Gln) + L-glutamate + ADP + phosphate + H(+). It catalyses the reaction L-aspartyl-tRNA(Asn) + L-glutamine + ATP + H2O = L-asparaginyl-tRNA(Asn) + L-glutamate + ADP + phosphate + 2 H(+). Functionally, allows the formation of correctly charged Asn-tRNA(Asn) or Gln-tRNA(Gln) through the transamidation of misacylated Asp-tRNA(Asn) or Glu-tRNA(Gln) in organisms which lack either or both of asparaginyl-tRNA or glutaminyl-tRNA synthetases. The reaction takes place in the presence of glutamine and ATP through an activated phospho-Asp-tRNA(Asn) or phospho-Glu-tRNA(Gln). The sequence is that of Aspartyl/glutamyl-tRNA(Asn/Gln) amidotransferase subunit C from Streptococcus equi subsp. equi (strain 4047).